The following is a 139-amino-acid chain: Actin-depolymerizing factor 1 (139 aa).

Positions 5–139 (ASGMAVHDDC…DLDVFRSRAN (135 aa)) constitute an ADF-H domain. A Phosphoserine; by CPK3 modification is found at Ser6.

It belongs to the actin-binding proteins ADF family. In terms of assembly, interacts with the 14-3-3-like protein GRF6/AFT1. Post-translationally, phosphorylation at Ser-6 by CPK3/CDPK6 inhibits actin-depolimerizing activity. Expressed in vascular tissues of all organs.

It localises to the cytoplasm. Its subcellular location is the cytoskeleton. Functionally, actin-depolymerizing protein. Stimulates F-actin depolymerization. Involved in plant development, cell organ expansion and flowering by controlling breakdown of thick actin cables. Severs actin filaments or bundles and promotes actin cytoskeleton disassembly. Binds monomeric actin (G-actin) with a marked preference for the ADP-loaded form and inhibits the rate of nucleotide exchange on G-actin. The polypeptide is Actin-depolymerizing factor 1 (ADF1) (Arabidopsis thaliana (Mouse-ear cress)).